The primary structure comprises 310 residues: Homoserine kinase (310 aa).

91–101 contacts ATP; it reads PIGSGLGSSAC.

It belongs to the GHMP kinase family. Homoserine kinase subfamily.

It localises to the cytoplasm. It catalyses the reaction L-homoserine + ATP = O-phospho-L-homoserine + ADP + H(+). It participates in amino-acid biosynthesis; L-threonine biosynthesis; L-threonine from L-aspartate: step 4/5. In terms of biological role, catalyzes the ATP-dependent phosphorylation of L-homoserine to L-homoserine phosphate. The protein is Homoserine kinase of Escherichia coli O6:K15:H31 (strain 536 / UPEC).